The primary structure comprises 293 residues: tRNA pseudouridine synthase B (293 aa).

The Nucleophile role is filled by D39.

This sequence belongs to the pseudouridine synthase TruB family. Type 1 subfamily.

The enzyme catalyses uridine(55) in tRNA = pseudouridine(55) in tRNA. Its function is as follows. Responsible for synthesis of pseudouridine from uracil-55 in the psi GC loop of transfer RNAs. The sequence is that of tRNA pseudouridine synthase B from Streptococcus mutans serotype c (strain ATCC 700610 / UA159).